The primary structure comprises 378 residues: Alcohol dehydrogenase 1 (378 aa).

C48 contacts Zn(2+). Residue 49-53 (HTDVL) participates in NAD(+) binding. 6 residues coordinate Zn(2+): H69, C99, C102, C105, C113, and C177. NAD(+)-binding positions include 202-207 (GIGTVG), D226, K231, 274-276 (TGV), 297-299 (IGA), and 321-323 (TTF).

Belongs to the zinc-containing alcohol dehydrogenase family. Class-IV subfamily. As to quaternary structure, homodimer. It depends on Zn(2+) as a cofactor. In terms of tissue distribution, expressed in flowers and disk florets.

The protein operates within isoprenoid biosynthesis. This is Alcohol dehydrogenase 1 from Tanacetum cinerariifolium (Dalmatian daisy).